The primary structure comprises 258 residues: Imidazole glycerol phosphate synthase subunit HisF (258 aa).

Catalysis depends on residues Asp11 and Asp130.

The protein belongs to the HisA/HisF family. In terms of assembly, heterodimer of HisH and HisF.

Its subcellular location is the cytoplasm. The enzyme catalyses 5-[(5-phospho-1-deoxy-D-ribulos-1-ylimino)methylamino]-1-(5-phospho-beta-D-ribosyl)imidazole-4-carboxamide + L-glutamine = D-erythro-1-(imidazol-4-yl)glycerol 3-phosphate + 5-amino-1-(5-phospho-beta-D-ribosyl)imidazole-4-carboxamide + L-glutamate + H(+). Its pathway is amino-acid biosynthesis; L-histidine biosynthesis; L-histidine from 5-phospho-alpha-D-ribose 1-diphosphate: step 5/9. Its function is as follows. IGPS catalyzes the conversion of PRFAR and glutamine to IGP, AICAR and glutamate. The HisF subunit catalyzes the cyclization activity that produces IGP and AICAR from PRFAR using the ammonia provided by the HisH subunit. The polypeptide is Imidazole glycerol phosphate synthase subunit HisF (Stenotrophomonas maltophilia (strain K279a)).